The following is a 283-amino-acid chain: Pantothenate synthetase 1 (283 aa).

Residue 30–37 (MGYLHDGH) coordinates ATP. The Proton donor role is filled by His37. Gln61 is a binding site for (R)-pantoate. Gln61 lines the beta-alanine pocket. 147-150 (GQKD) serves as a coordination point for ATP. Residue Gln153 coordinates (R)-pantoate. ATP-binding positions include Val176 and 184 to 187 (MSSR).

This sequence belongs to the pantothenate synthetase family. As to quaternary structure, homodimer.

It localises to the cytoplasm. It catalyses the reaction (R)-pantoate + beta-alanine + ATP = (R)-pantothenate + AMP + diphosphate + H(+). Its pathway is cofactor biosynthesis; (R)-pantothenate biosynthesis; (R)-pantothenate from (R)-pantoate and beta-alanine: step 1/1. Its function is as follows. Catalyzes the condensation of pantoate with beta-alanine in an ATP-dependent reaction via a pantoyl-adenylate intermediate. The chain is Pantothenate synthetase 1 from Bradyrhizobium diazoefficiens (strain JCM 10833 / BCRC 13528 / IAM 13628 / NBRC 14792 / USDA 110).